The following is a 239-amino-acid chain: Sugar fermentation stimulation protein homolog (239 aa).

It belongs to the SfsA family.

The chain is Sugar fermentation stimulation protein homolog from Rhizobium meliloti (strain 1021) (Ensifer meliloti).